Consider the following 1269-residue polypeptide: Myb-binding protein 1A-like protein (1269 aa).

The disordered stretch occupies residues 708 to 783 (DPNKDEDESG…EEDEAMEEGQ (76 aa)). Residues 721-730 (TDDKKRKLKE) are compositionally biased toward basic and acidic residues. A compositionally biased stretch (acidic residues) spans 731–783 (EDEDDDDEEEDDDNDEGDDDDDDDDEEEGGEEGEESSDSSDDEEEDEAMEEGQ). The residue at position 810 (S810) is a Phosphoserine. The segment at 1163–1269 (VKKVPEAEQT…KKKKKGADGE (107 aa)) is disordered. Residues 1177–1195 (KKKKGFLPETKKRKNRKKP) are compositionally biased toward basic residues. Basic and acidic residues predominate over residues 1199–1211 (EGKETETPVEKTP). Composition is skewed to basic residues over residues 1221 to 1232 (NKNKKKNKKRKQ) and 1256 to 1269 (KQKKKKKKKGADGE).

It belongs to the MYBBP1A family.

The protein resides in the nucleus. Its subcellular location is the nucleolus. In terms of biological role, may activate or repress transcription via interactions with sequence specific DNA-binding proteins. May play a role in the repression of the circadian clock gene expression. This Danio rerio (Zebrafish) protein is Myb-binding protein 1A-like protein (mybbp1a).